A 335-amino-acid polypeptide reads, in one-letter code: Protein-arginine N-acetylglucosaminyltransferase SseK3 (335 aa).

UDP-N-acetyl-alpha-D-glucosamine contacts are provided by residues glutamine 51–phenylalanine 53 and tyrosine 75. Arginine 153 and arginine 184 each carry an N-beta-linked (GlcNAc) arginine; by autocatalysis glycan. Position 224 to 227 (tyrosine 224 to alanine 227) interacts with UDP-N-acetyl-alpha-D-glucosamine. The short motif at aspartate 226 to aspartate 228 is the DXD motif element. Aspartate 228 lines the Mn(2+) pocket. The Proton acceptor role is filled by glutamate 258. A glycan (N-beta-linked (GlcNAc) arginine; by autocatalysis) is linked at arginine 305. 2 residues coordinate Mn(2+): aspartate 325 and serine 327. UDP-N-acetyl-alpha-D-glucosamine is bound by residues serine 327 and serine 332–arginine 335. Arginine 335 carries N-beta-linked (GlcNAc) arginine; by autocatalysis glycosylation.

It belongs to the glycosyltransferase NleB family. As to quaternary structure, interacts with host TRIM32; without mediating its GlcNAcylation. Mn(2+) is required as a cofactor. In terms of processing, auto-glycosylated: arginine GlcNAcylation is required for activity toward death domain-containing host target proteins.

It localises to the secreted. It is found in the host Golgi apparatus. It carries out the reaction L-arginyl-[protein] + UDP-N-acetyl-alpha-D-glucosamine = N(omega)-(N-acetyl-beta-D-glucosaminyl)-L-arginyl-[protein] + UDP + H(+). Functionally, protein-arginine N-acetylglucosaminyltransferase effector that disrupts TNF signaling in infected cells, including NF-kappa-B signaling and apoptosis. Acts by catalyzing the transfer of a single N-acetylglucosamine (GlcNAc) to a conserved arginine residue in the death domain of host proteins such as TRADD, TNFRSF1A/TNFR1 and TNFRSF10B/TRAILR2: arginine GlcNAcylation prevents homotypic/heterotypic death domain interactions and assembly of the oligomeric TNF-alpha receptor complex, thereby disrupting TNF signaling. Also acts on host proteins without a death domain: catalyzes arginine GlcNAcylation of host small Rab GTPase (Rab1, Rab5 and Rab11), thereby preventing GTPase activity and leading to impaired host vesicular protein transport. Also mediates auto-GlcNAcylation, which is required for activity toward death domain-containing host target proteins. The polypeptide is Protein-arginine N-acetylglucosaminyltransferase SseK3 (Salmonella typhimurium (strain SL1344)).